A 372-amino-acid polypeptide reads, in one-letter code: ATP phosphoribosyltransferase regulatory subunit (372 aa).

It belongs to the class-II aminoacyl-tRNA synthetase family. HisZ subfamily. Heteromultimer composed of HisG and HisZ subunits.

It localises to the cytoplasm. It functions in the pathway amino-acid biosynthesis; L-histidine biosynthesis; L-histidine from 5-phospho-alpha-D-ribose 1-diphosphate: step 1/9. Functionally, required for the first step of histidine biosynthesis. May allow the feedback regulation of ATP phosphoribosyltransferase activity by histidine. This chain is ATP phosphoribosyltransferase regulatory subunit, found in Rhizobium rhizogenes (strain K84 / ATCC BAA-868) (Agrobacterium radiobacter).